Reading from the N-terminus, the 106-residue chain is Prothymosin alpha-B (106 aa).

The segment covering 1–39 (MADAKVDSATEISAKDLKEKKLIEEKENGKDATNGKENE) has biased composition (basic and acidic residues). A disordered region spans residues 1 to 106 (MADAKVDSAT…DVDPKKQKVN (106 aa)). At Ser-8 the chain carries Phosphoserine. At Thr-10 the chain carries Phosphothreonine. Composition is skewed to acidic residues over residues 40-76 (ENGEPEIDDEDDDEVDEDDEEGEGDEDEDEDDDDEDL) and 85-98 (DDDEDEDEDDEDDV).

The protein belongs to the pro/parathymosin family. Uniformly expressed in all embryonic cells at 4 and 8 hpf. At the 20-somite stage (18 hpf), ubiquitously expressed in the developing nervous system, in the tail bud and in the pronephric ducts. Also expressed in some placodes, including the anterior lateral line placode, otic vesicle and olfactory placode. At 27 hpf, strong expression persists in the central nervous system and the olfactory placode. Expressed strongly in the eyes and the pectoral fin buds. In the tail region, expressed in the spinal cord, in the posterior lateral line precursors, and persists in the pronephric ducts. At 48 hpf, expressed in all head territories including the developing brain, eyes, and pharyngeal arches. More caudally, expression persists in the pectoral fin buds, the spinal cord and, for the first time, appears in the intestine. At 72 hpf, expressed only in restricted regions of the brain, in pharyngeal arches region and in the amacrine cells and the horizontal cells of the retina.

Its subcellular location is the nucleus. The sequence is that of Prothymosin alpha-B from Danio rerio (Zebrafish).